Consider the following 143-residue polypeptide: MPTSATAVAPSTGSVQKKDQDWRAILSPEQFRVLREKGTENRGKGEYTKLFDDGIYSCAGCATPLYKSTTKFDSGCGWPSFFDAIPGAIKQTPEAGGRRMEITCAACDGHLGHVVKGEGFPTATDERHCVNSVSLKFSEISSQ.

Positions 19–140 constitute a MsrB domain; it reads DQDWRAILSP…NSVSLKFSEI (122 aa). The Zn(2+) site is built by Cys-58, Cys-61, Cys-104, and Cys-107. Cysteines 76 and 129 form a disulfide. Cys-129 (nucleophile) is an active-site residue.

Belongs to the MsrB Met sulfoxide reductase family. It depends on Zn(2+) as a cofactor.

It localises to the cytoplasm. The protein resides in the cytosol. It catalyses the reaction L-methionyl-[protein] + [thioredoxin]-disulfide + H2O = L-methionyl-(R)-S-oxide-[protein] + [thioredoxin]-dithiol. In terms of biological role, catalyzes the reduction of methionine sulfoxide (MetSO) to methionine in proteins. Plays a protective role against oxidative stress by restoring activity to proteins that have been inactivated by methionine oxidation. MSRB family specifically reduces the MetSO R-enantiomer. The sequence is that of Peptide methionine sulfoxide reductase B9 (MSRB9) from Arabidopsis thaliana (Mouse-ear cress).